The chain runs to 112 residues: Large ribosomal subunit protein mL53 (112 aa).

Belongs to the mitochondrion-specific ribosomal protein mL53 family. As to quaternary structure, component of the mitochondrial large ribosomal subunit (mt-LSU). Mature mammalian 55S mitochondrial ribosomes consist of a small (28S) and a large (39S) subunit. The 28S small subunit contains a 12S ribosomal RNA (12S mt-rRNA) and 30 different proteins. The 39S large subunit contains a 16S rRNA (16S mt-rRNA), a copy of mitochondrial valine transfer RNA (mt-tRNA(Val)), which plays an integral structural role, and 52 different proteins. mL53 is located at the L7/L12 stalk.

The protein localises to the mitochondrion. The protein is Large ribosomal subunit protein mL53 (MRPL53) of Homo sapiens (Human).